Consider the following 305-residue polypeptide: Protein hrde-2 (305 aa).

Disordered regions lie at residues 211–233 and 267–305; these read AEMV…PVPA and EMSN…EYCQ. Residues 215-227 are compositionally biased toward polar residues; sequence PSNTTGSSGSPMS. Residues 268-287 are compositionally biased toward acidic residues; that stretch reads MSNDEYSPDESENDENEYDY. A compositionally biased stretch (basic and acidic residues) spans 289-305; that stretch reads NAARYDDGYDEGHEYCQ.

As to expression, expressed throughout the male and female germline.

Its subcellular location is the nucleus. In terms of biological role, plays a role in germline RNA interference (RNAi), and in particular is required for piwi-interacting RNA (piRNA) gene silencing. Facilitates the binding of the argonaut protein hrde-1 to small interfering RNAs (siRNAs) targets that are required for transgenerational epigenetic inheritance and germline immortality. This chain is Protein hrde-2, found in Caenorhabditis elegans.